Reading from the N-terminus, the 410-residue chain is Elongation factor Tu, chloroplastic (410 aa).

In terms of domain architecture, tr-type G spans 10 to 215; the sequence is KPHVNIGTIG…NVDSYIPTPE (206 aa). The segment at 19-26 is G1; sequence GHVDHGKT. Residue 19-26 participates in GTP binding; sequence GHVDHGKT. Residue threonine 26 participates in Mg(2+) binding. The interval 61–65 is G2; sequence GITIN. The G3 stretch occupies residues 82–85; it reads DCPG. Residues 82–86 and 137–140 contribute to the GTP site; these read DCPGH and NKKD. Residues 137-140 are G4; sequence NKKD. The G5 stretch occupies residues 175-177; it reads SAL.

Belongs to the TRAFAC class translation factor GTPase superfamily. Classic translation factor GTPase family. EF-Tu/EF-1A subfamily.

The protein localises to the plastid. It is found in the chloroplast. The catalysed reaction is GTP + H2O = GDP + phosphate + H(+). Its function is as follows. GTP hydrolase that promotes the GTP-dependent binding of aminoacyl-tRNA to the A-site of ribosomes during protein biosynthesis. The protein is Elongation factor Tu, chloroplastic (tufA) of Oltmannsiellopsis viridis (Marine flagellate).